We begin with the raw amino-acid sequence, 1367 residues long: Paired amphipathic helix protein Sin3-like 2 (1367 aa).

The disordered stretch occupies residues 14–44; sequence QFKRPLGSSRGESYEQSPITGGGSIGEGGIN. Positions 33-42 are enriched in gly residues; the sequence is TGGGSIGEGG. PAH domains follow at residues 46 to 116 and 130 to 200; these read QKLT…LPKG and KTVE…LPDS. Residues 212–322 are disordered; that stretch reads SQAQRYDDRG…EAYSGPASHS (111 aa). 2 stretches are compositionally biased toward basic and acidic residues: residues 230–286 and 299–311; these read MFME…SRDL and FSEK…RMEG. Residues 327–396 enclose the PAH 3 domain; the sequence is LKSMYNQAFL…DEFNQFFERC (70 aa). Disordered stretches follow at residues 417-446, 786-883, 912-946, and 958-1031; these read EENL…KERS, DVHA…LSKP, QSDT…DSED, and ATAK…EGME. Basic and acidic residues-rich tracts occupy residues 424–446 and 806–819; these read VKGE…KERS and SSGK…DLAN. 2 stretches are compositionally biased toward polar residues: residues 851–876 and 912–923; these read ATSS…SSGS and QSDTSKANSNYD. Residues 958–967 show a composition bias toward basic and acidic residues; that stretch reads ATAKTEHSVE. Composition is skewed to acidic residues over residues 968 to 989 and 997 to 1016; these read AEGE…EAGE and IGDE…EHDE. Residue Ser1023 is modified to Phosphoserine.

It is found in the nucleus. Acts as a transcriptional repressor. Plays roles in regulating gene expression and genome stability. The polypeptide is Paired amphipathic helix protein Sin3-like 2 (SNL2) (Arabidopsis thaliana (Mouse-ear cress)).